The following is a 707-amino-acid chain: Terpene cyclase/mutase atnI (707 aa).

The segment covering Met-1–Thr-20 has biased composition (polar residues). The tract at residues Met-1–Gly-22 is disordered. PFTB repeat units lie at residues Ala-130–Gly-173, Leu-494–Thr-535, Thr-571–Ala-608, and Ser-620–Ala-661.

It belongs to the terpene cyclase/mutase family.

Its pathway is secondary metabolite biosynthesis; terpenoid biosynthesis. Its function is as follows. Terpene cyclase/mutase; part of the gene cluster that mediates the biosynthesis of the meroterpenoids arthripenoids. The pathway begins with the HR-PKS atnH that catalyzes two chain-extension steps to form a reduced triketide, which then primes the SAT domain in the NR-PKS atnG to initiate three more cycles of extension to give a linear hexaketide corresponding to the polyketide part of arthripenoids. The FAD-dependent monooxygenase atnJ then performs an oxidative decarboxylation at C11 of the atnH/atnG product, via an electrophilic aromatic hydroxylation with concomitant ipso-decarboxylation. The membrane-bound polyprenyl transferase atnF then introduces a farnesyl group before the FAD-dependent monooxygenase atnK functions as the first epoxidase on terminal C12'-C13' olefin, followed by a second epoxidation on C7'-C8' catalyzed by atnA. The terpene cyclase/mutase atnI then initiates the sequential tricyclic ring formation through protonation of the terminal epoxide and catalyzes the regioselective and stereoselective 6/6/6-tricyclic ring formation. The cytochrome P450 monooxygenase atnM is responsible for hydroxylating both C1' and C10'. The next steps may involve ketoreduction and acetyl transfer by the ketoreductase atnB and the acetyltransferase atnC, and lead to the production of arthripenoid B, the final biosynthetic product of the atn cluster. The hydroquinone moiety in arthripenoid B is prone to undergo spontaneous oxidation to afford a benzoquinone compound, a key intermediate for generating structure diversity. For instance, addition of a cysteine followed by ring contraction gives arthripenoid A, tautomerization gives the main product arthripenoid C, addition of a molecular of water or amine affords arthripenoid D or E, respectively, and loss of one water forms arthripenoid F. This Arthrinium sp protein is Terpene cyclase/mutase atnI.